A 290-amino-acid polypeptide reads, in one-letter code: ADP-dependent (S)-NAD(P)H-hydrate dehydratase (290 aa).

The 274-residue stretch at 5–278 folds into the YjeF C-terminal domain; sequence NQTLLEKVII…RYLPKIMKII (274 aa). The (6S)-NADPHX site is built by A40, G103, and H152. G218 contacts AMP. D219 contributes to the (6S)-NADPHX binding site.

It belongs to the NnrD/CARKD family. In terms of assembly, homotetramer. It depends on Mg(2+) as a cofactor.

It carries out the reaction (6S)-NADHX + ADP = AMP + phosphate + NADH + H(+). It catalyses the reaction (6S)-NADPHX + ADP = AMP + phosphate + NADPH + H(+). In terms of biological role, catalyzes the dehydration of the S-form of NAD(P)HX at the expense of ADP, which is converted to AMP. Together with NAD(P)HX epimerase, which catalyzes the epimerization of the S- and R-forms, the enzyme allows the repair of both epimers of NAD(P)HX, a damaged form of NAD(P)H that is a result of enzymatic or heat-dependent hydration. The protein is ADP-dependent (S)-NAD(P)H-hydrate dehydratase of Streptococcus pneumoniae (strain ATCC BAA-255 / R6).